Here is a 143-residue protein sequence, read N- to C-terminus: uncharacterized protein (143 aa).

The N-terminal 38 residues, 1 to 38, are a transit peptide targeting the mitochondrion; sequence MKYWKYLSQLTIRRPLTYNNALLYRNRFPSILTWKRSA.

Its subcellular location is the mitochondrion. This is an uncharacterized protein from Schizosaccharomyces pombe (strain 972 / ATCC 24843) (Fission yeast).